The following is a 161-amino-acid chain: Small ribosomal subunit protein uS19 (161 aa).

The span at 1–19 (MARQKKYSGKGGARKKNKQ) shows a compositional bias: basic residues. A disordered region spans residues 1–26 (MARQKKYSGKGGARKKNKQKQNVAPR).

This sequence belongs to the universal ribosomal protein uS19 family.

In terms of biological role, protein S19 forms a complex with S13 that binds strongly to the 16S ribosomal RNA. This chain is Small ribosomal subunit protein uS19, found in Methanococcus maripaludis (strain C5 / ATCC BAA-1333).